Consider the following 336-residue polypeptide: Ferrochelatase (336 aa).

Residues H206 and E287 each contribute to the Fe cation site.

This sequence belongs to the ferrochelatase family.

It is found in the cytoplasm. The enzyme catalyses heme b + 2 H(+) = protoporphyrin IX + Fe(2+). It functions in the pathway porphyrin-containing compound metabolism; protoheme biosynthesis; protoheme from protoporphyrin-IX: step 1/1. Catalyzes the ferrous insertion into protoporphyrin IX. This chain is Ferrochelatase, found in Neisseria gonorrhoeae (strain ATCC 700825 / FA 1090).